Reading from the N-terminus, the 562-residue chain is Glutamate--tRNA ligase (562 aa).

The short motif at 104–114 (PNPDFYMTLGN) is the 'HIGH' region element.

The protein belongs to the class-I aminoacyl-tRNA synthetase family. Glutamate--tRNA ligase type 2 subfamily.

The protein resides in the cytoplasm. It carries out the reaction tRNA(Glu) + L-glutamate + ATP = L-glutamyl-tRNA(Glu) + AMP + diphosphate. In terms of biological role, catalyzes the attachment of glutamate to tRNA(Glu) in a two-step reaction: glutamate is first activated by ATP to form Glu-AMP and then transferred to the acceptor end of tRNA(Glu). The protein is Glutamate--tRNA ligase of Ignicoccus hospitalis (strain KIN4/I / DSM 18386 / JCM 14125).